The following is a 428-amino-acid chain: Histone deacetylase 3 (428 aa).

The interval 3–316 (KTVAYFYDPD…WTYETSLLVE (314 aa)) is histone deacetylase. Residues His17, Gly21, and Lys25 each contribute to the 1D-myo-inositol 1,4,5,6-tetrakisphosphate site. His135 is an active-site residue. Zn(2+)-binding residues include Asp170, His172, and Asp259. Arg265 is a binding site for 1D-myo-inositol 1,4,5,6-tetrakisphosphate. Basic and acidic residues-rich tracts occupy residues 388-405 (DRTDEADAEERGPEENYS) and 415-428 (DGDHDNDKESDVEI). The segment at 388-428 (DRTDEADAEERGPEENYSRPEAPNEFYDGDHDNDKESDVEI) is disordered. Ser424 carries the post-translational modification Phosphoserine.

It belongs to the histone deacetylase family. HD type 1 subfamily. In terms of assembly, interacts with HDAC7 and HDAC9. Interacts with HDAC10, DAXX and DACH1. Found in a complex with NCOR1 and NCOR2. Component of the N-Cor repressor complex, at least composed of NCOR1, NCOR2, HDAC3, TBL1X, TBL1R, CORO2A and GPS2. Interacts with BCOR, MJD2A/JHDM3A, NRIP1, PRDM6 and SRY. Interacts with BTBD14B. Interacts with GLIS2. Interacts (via the DNA-binding domain) with NR2C1; the interaction recruits phosphorylated NR2C1 to PML bodies for sumoylation. Component of the Notch corepressor complex. Interacts with CBFA2T3 and NKAP. Interacts with APEX1; the interaction is not dependent on the acetylated status of APEX1. Interacts with and deacetylates MAPK14. Interacts with ZMYND15. Interacts with SMRT/NCOR2 and BCL6 on DNA enhancer elements. Interacts with INSM1. Interacts with XBP1; the interaction occurs in endothelial cell (EC) under disturbed flow. Interacts (via C-terminus) with CCAR2 (via N-terminus). Interacts with and deacetylates MEF2D. Interacts with BEND3. Interacts with NKAPL. Interacts with DHX36; this interaction occurs in a RNA-dependent manner. Interacts weakly with CRY1; this interaction is enhanced in the presence of FBXL3. Interacts with FBXL3 and BMAL1. Interacts with NCOR1. Interacts with RARA. Interacts with SETD5. Deubiquitinated on 'Lys-63'-linked ubiquitin chains by USP38; leading to a decreased level of histone acetylation. In terms of processing, sumoylated in vitro.

It is found in the nucleus. The protein resides in the chromosome. It localises to the cytoplasm. The protein localises to the cytosol. It carries out the reaction N(6)-acetyl-L-lysyl-[histone] + H2O = L-lysyl-[histone] + acetate. The catalysed reaction is N(6)-acetyl-L-lysyl-[protein] + H2O = L-lysyl-[protein] + acetate. The enzyme catalyses N(6)-(2E)-butenoyl-L-lysyl-[protein] + H2O = (2E)-2-butenoate + L-lysyl-[protein]. It catalyses the reaction N(6)-(2-hydroxyisobutanoyl)-L-lysyl-[protein] + H2O = 2-hydroxy-2-methylpropanoate + L-lysyl-[protein]. It carries out the reaction N(6)-[(S)-lactoyl]-L-lysyl-[protein] + H2O = (S)-lactate + L-lysyl-[protein]. Its activity is regulated as follows. Inositol tetraphosphate (1D-myo-inositol 1,4,5,6-tetrakisphosphate) promotes the histone deacetylase activity by acting as an intermolecular glue between HDAC3 and NCOR2, thereby promoting its association with the N-Cor complex, a prerequisite for the histone deacetylase activity. In terms of biological role, histone deacetylase that catalyzes the deacetylation of lysine residues on the N-terminal part of the core histones (H2A, H2B, H3 and H4), and some other non-histone substrates. Histone deacetylation gives a tag for epigenetic repression and plays an important role in transcriptional regulation, cell cycle progression and developmental events. Histone deacetylases act via the formation of large multiprotein complexes, such as N-Cor repressor complex, which activate the histone deacetylase activity. Participates in the BCL6 transcriptional repressor activity by deacetylating the H3 'Lys-27' (H3K27) on enhancer elements, antagonizing EP300 acetyltransferase activity and repressing proximal gene expression. Acts as a molecular chaperone for shuttling phosphorylated NR2C1 to PML bodies for sumoylation. Contributes, together with XBP1 isoform 1, to the activation of NFE2L2-mediated HMOX1 transcription factor gene expression in a PI(3)K/mTORC2/Akt-dependent signaling pathway leading to endothelial cell (EC) survival under disturbed flow/oxidative stress. Regulates both the transcriptional activation and repression phases of the circadian clock in a deacetylase activity-independent manner. During the activation phase, promotes the accumulation of ubiquitinated BMAL1 at the E-boxes and during the repression phase, blocks FBXL3-mediated CRY1/2 ubiquitination and promotes the interaction of CRY1 and BMAL1. The NCOR1-HDAC3 complex regulates the circadian expression of the core clock gene BMAL1 and the genes involved in lipid metabolism in the liver. Also functions as a deacetylase for non-histone targets, such as KAT5, MEF2D, MAPK14, RARA and STAT3. Serves as a corepressor of RARA, mediating its deacetylation and repression, leading to inhibition of RARE DNA element binding. In association with RARA, plays a role in the repression of microRNA-10a and thereby in the inflammatory response. In addition to protein deacetylase activity, also acts as a protein-lysine deacylase by recognizing other acyl groups: catalyzes removal of (2E)-butenoyl (crotonyl), lactoyl (lactyl) and 2-hydroxyisobutanoyl (2-hydroxyisobutyryl) acyl groups from lysine residues, leading to protein decrotonylation, delactylation and de-2-hydroxyisobutyrylation, respectively. Catalyzes decrotonylation of MAPRE1/EB1. Mediates delactylation NBN/NBS1, thereby inhibiting DNA double-strand breaks (DSBs) via homologous recombination (HR). The sequence is that of Histone deacetylase 3 (HDAC3) from Pongo abelii (Sumatran orangutan).